A 144-amino-acid chain; its full sequence is Large ribosomal subunit protein uL15 (144 aa).

Residues 1 to 49 (MRLNTLSPAAGSKSAPKRVGRGIGSGLGKTAGRGHKGQKSRSGGGVRVG) form a disordered region. The segment covering 21–31 (RGIGSGLGKTA) has biased composition (gly residues).

Belongs to the universal ribosomal protein uL15 family. In terms of assembly, part of the 50S ribosomal subunit.

Its function is as follows. Binds to the 23S rRNA. In Shewanella denitrificans (strain OS217 / ATCC BAA-1090 / DSM 15013), this protein is Large ribosomal subunit protein uL15.